A 469-amino-acid polypeptide reads, in one-letter code: Receptor-type adenylate cyclase (469 aa).

Residues 1 to 59 are Extracellular-facing; it reads VDTAEKLSKNGCASNYGATQISVWSMARALNASIPPLTNPMTPSMTFRNSNAGRISGVA. N31 carries an N-linked (GlcNAc...) asparagine glycan. Residues 60–80 traverse the membrane as a helical segment; sequence LVGVIIGGALALFLVVALGVV. Residues 81 to 469 lie on the Cytoplasmic side of the membrane; that stretch reads PYFFLHNTRD…IDLENDSTTS (389 aa). Residues 103 to 257 enclose the Guanylate cyclase domain; that stretch reads TLIFTDIESS…RTSNMAARTE (155 aa). D108 and D151 together coordinate Mg(2+).

It belongs to the adenylyl cyclase class-3 family. Mg(2+) is required as a cofactor.

The protein resides in the cell membrane. It catalyses the reaction ATP = 3',5'-cyclic AMP + diphosphate. In terms of biological role, could act as a receptor for an unknown ligand. This Trypanosoma equiperdum protein is Receptor-type adenylate cyclase (ESAG4C).